We begin with the raw amino-acid sequence, 556 residues long: Phosphoglucomutase (556 aa).

2 residues coordinate alpha-D-glucose 1,6-bisphosphate: Arg22 and Ser114. Ser114 acts as the Phosphoserine intermediate in catalysis. Ser114, Asp279, Asp281, and Asp283 together coordinate Mg(2+). Ser114 bears the Phosphoserine mark. Residues Asp283, Arg284, Thr347, Glu366, Ser368, and Lys379 each contribute to the alpha-D-glucose 1,6-bisphosphate site.

This sequence belongs to the phosphohexose mutase family. As to quaternary structure, monomer. Requires Mg(2+) as cofactor.

It is found in the cytoplasm. The catalysed reaction is alpha-D-glucose 1-phosphate = alpha-D-glucose 6-phosphate. It catalyses the reaction O-phospho-L-seryl-[protein] + alpha-D-glucose 1-phosphate = alpha-D-glucose 1,6-bisphosphate + L-seryl-[protein]. It carries out the reaction alpha-D-glucose 1,6-bisphosphate + L-seryl-[protein] = O-phospho-L-seryl-[protein] + alpha-D-glucose 6-phosphate. In terms of biological role, catalyzes the reversible isomerization of alpha-D-glucose 1-phosphate to alpha-D-glucose 6-phosphate. The mechanism proceeds via the intermediate compound alpha-D-glucose 1,6-bisphosphate. Key enzyme in hexose metabolism. The reverse reaction is an essential step for biosynthesis because glucose 1-phosphate is the starting point for the synthesis of UDP-glucose, which acts as a precursor for the synthesis of oligosaccharides and trehalose. This Emericella nidulans (strain FGSC A4 / ATCC 38163 / CBS 112.46 / NRRL 194 / M139) (Aspergillus nidulans) protein is Phosphoglucomutase (pgmB).